The chain runs to 328 residues: Homeobox protein Hox-D1 (328 aa).

Residues 204–209 (TFEWMK) carry the Antp-type hexapeptide motif. A DNA-binding region (homeobox) is located at residues 229 to 288 (SSAIRTNFSTKQLTELEKEFHFNKYLTRARRIEIANCLHLNDTQVKIWFQNRRMKQKKRE). A disordered region spans residues 305–328 (PLSGTTPTKFIKNPGSPSQSQEPS). Residues 319 to 328 (GSPSQSQEPS) show a composition bias toward polar residues.

This sequence belongs to the Antp homeobox family. Labial subfamily.

The protein resides in the nucleus. Sequence-specific transcription factor which is part of a developmental regulatory system that provides cells with specific positional identities on the anterior-posterior axis. Acts on the anterior body structures. The sequence is that of Homeobox protein Hox-D1 (HOXD1) from Homo sapiens (Human).